Consider the following 719-residue polypeptide: DNA ligase (719 aa).

NAD(+)-binding positions include 42–46, 92–93, and Glu-126; these read DAAYD and SL. Lys-128 (N6-AMP-lysine intermediate) is an active-site residue. NAD(+) contacts are provided by Arg-149, Glu-185, Lys-301, and Lys-325. Zn(2+) contacts are provided by Cys-430, Cys-433, Cys-448, and Cys-454. A BRCT domain is found at 640 to 719; sequence ATGSPVEGKT…DDWFKLVGED (80 aa).

This sequence belongs to the NAD-dependent DNA ligase family. LigA subfamily. Mg(2+) is required as a cofactor. It depends on Mn(2+) as a cofactor.

The catalysed reaction is NAD(+) + (deoxyribonucleotide)n-3'-hydroxyl + 5'-phospho-(deoxyribonucleotide)m = (deoxyribonucleotide)n+m + AMP + beta-nicotinamide D-nucleotide.. Its function is as follows. DNA ligase that catalyzes the formation of phosphodiester linkages between 5'-phosphoryl and 3'-hydroxyl groups in double-stranded DNA using NAD as a coenzyme and as the energy source for the reaction. It is essential for DNA replication and repair of damaged DNA. In Brucella ovis (strain ATCC 25840 / 63/290 / NCTC 10512), this protein is DNA ligase.